The chain runs to 299 residues: GTPase Era (299 aa).

The region spanning Lys5–Glu172 is the Era-type G domain. The segment at Gly13–Ser20 is G1. Gly13 to Ser20 contacts GTP. Residues Gln39 to Asn43 are G2. Residues Asp60–Gly63 are G3. GTP is bound by residues Asp60–Ile64 and Asn122–Asp125. The interval Asn122–Asp125 is G4. Residues Ile151–Ala153 form a G5 region. The region spanning Thr203–Arg280 is the KH type-2 domain.

It belongs to the TRAFAC class TrmE-Era-EngA-EngB-Septin-like GTPase superfamily. Era GTPase family. As to quaternary structure, monomer.

It is found in the cytoplasm. The protein localises to the cell membrane. Its function is as follows. An essential GTPase that binds both GDP and GTP, with rapid nucleotide exchange. Plays a role in 16S rRNA processing and 30S ribosomal subunit biogenesis and possibly also in cell cycle regulation and energy metabolism. The chain is GTPase Era from Staphylococcus aureus (strain Mu3 / ATCC 700698).